We begin with the raw amino-acid sequence, 101 residues long: Protein S100-A7A (101 aa).

2 EF-hand domains span residues 13–48 and 50–85; these read MIDM…SACD and KGIH…IAAD. Zn(2+) is bound by residues His18, Glu28, and Glu38. 2 residues coordinate Ca(2+): Asp63 and Asn65. Residue Glu66 participates in Zn(2+) binding. Residues Asp67, Lys69, and Glu74 each contribute to the Ca(2+) site. Residues His87 and His91 each coordinate Zn(2+).

It belongs to the S-100 family. In terms of tissue distribution, overexpressed in psoriasis.

It localises to the cytoplasm. Its function is as follows. May be involved in epidermal differentiation and inflammation and might therefore be important for the pathogenesis of psoriasis and other diseases. The protein is Protein S100-A7A (S100A7A) of Homo sapiens (Human).